The primary structure comprises 180 residues: Cancer/testis antigen 1 (180 aa).

2 stretches are compositionally biased toward gly residues: residues 1 to 47 and 55 to 66; these read MQAE…GPRG and GPGGGAPRGPHG. Residues 1 to 66 are disordered; that stretch reads MQAEGRGTGG…GGGAPRGPHG (66 aa).

Belongs to the CTAG/PCC1 family. In terms of tissue distribution, expressed in testis and ovary and in a wide variety of cancers. Detected in uterine myometrium. Expressed from 18 weeks until birth in human fetal testis. In the adult testis, is strongly expressed in spermatogonia and in primary spermatocytes, but not in post-meiotic cells or in testicular somatic cells (at protein level).

Its subcellular location is the cytoplasm. This Homo sapiens (Human) protein is Cancer/testis antigen 1 (CTAG1A).